A 205-amino-acid polypeptide reads, in one-letter code: Glycerol-3-phosphate acyltransferase (205 aa).

Transmembrane regions (helical) follow at residues I4–V24, P80–F100, G107–A127, W130–I150, and V155–L175.

It belongs to the PlsY family. Probably interacts with PlsX.

It is found in the cell inner membrane. The enzyme catalyses an acyl phosphate + sn-glycerol 3-phosphate = a 1-acyl-sn-glycero-3-phosphate + phosphate. The protein operates within lipid metabolism; phospholipid metabolism. Its function is as follows. Catalyzes the transfer of an acyl group from acyl-phosphate (acyl-PO(4)) to glycerol-3-phosphate (G3P) to form lysophosphatidic acid (LPA). This enzyme utilizes acyl-phosphate as fatty acyl donor, but not acyl-CoA or acyl-ACP. The chain is Glycerol-3-phosphate acyltransferase from Klebsiella pneumoniae (strain 342).